The sequence spans 468 residues: Argininosuccinate synthase (468 aa).

Residues 10–18 (AYSGGLDTS) and A37 contribute to the ATP site. Residues Y90 and S95 each coordinate L-citrulline. G120 is an ATP binding site. The L-aspartate site is built by T122, N126, and D127. N126 contacts L-citrulline. L-citrulline contacts are provided by R130, S182, S191, E267, and Y279. Residues 445 to 457 (PVAAKATAKPVKA) show a composition bias toward low complexity. The interval 445-468 (PVAAKATAKPVKAPVKKPIAKKKG) is disordered. The span at 458 to 468 (PVKKPIAKKKG) shows a compositional bias: basic residues.

The protein belongs to the argininosuccinate synthase family. Type 1 subfamily. As to quaternary structure, homotetramer.

The protein resides in the cytoplasm. The catalysed reaction is L-citrulline + L-aspartate + ATP = 2-(N(omega)-L-arginino)succinate + AMP + diphosphate + H(+). Its pathway is amino-acid biosynthesis; L-arginine biosynthesis; L-arginine from L-ornithine and carbamoyl phosphate: step 2/3. The chain is Argininosuccinate synthase from Dechloromonas aromatica (strain RCB).